The chain runs to 436 residues: Protein Z-dependent protease inhibitor (436 aa).

The signal sequence occupies residues 1–20 (MRVVSSLFLPVLLAEVWLVS). N-linked (GlcNAc...) asparagine glycosylation is found at N23, N42, and N69. The interval 128-145 (AGPLILPALFKRVKETFS) is heparin-binding. 3 N-linked (GlcNAc...) asparagine glycosylation sites follow: N172, N189, and N287.

It belongs to the serpin family. Phosphorylated by FAM20C in the extracellular medium. In terms of tissue distribution, expressed by the liver and secreted in plasma.

It is found in the secreted. In terms of biological role, inhibits activity of the coagulation protease factor Xa in the presence of PROZ, calcium and phospholipids. Also inhibits factor XIa in the absence of cofactors. In Rattus norvegicus (Rat), this protein is Protein Z-dependent protease inhibitor (Serpina10).